A 119-amino-acid chain; its full sequence is Holo-[acyl-carrier-protein] synthase (119 aa).

The Mg(2+) site is built by aspartate 8 and glutamate 58.

It belongs to the P-Pant transferase superfamily. AcpS family. Mg(2+) is required as a cofactor.

The protein resides in the cytoplasm. It carries out the reaction apo-[ACP] + CoA = holo-[ACP] + adenosine 3',5'-bisphosphate + H(+). Functionally, transfers the 4'-phosphopantetheine moiety from coenzyme A to a Ser of acyl-carrier-protein. The polypeptide is Holo-[acyl-carrier-protein] synthase (Halalkalibacterium halodurans (strain ATCC BAA-125 / DSM 18197 / FERM 7344 / JCM 9153 / C-125) (Bacillus halodurans)).